A 256-amino-acid polypeptide reads, in one-letter code: Metallo-beta-lactamase type 2 (256 aa).

A signal peptide spans 1 to 29 (MKNTLLKLGVCVSLLGITPFVSTISSVQA). Residues histidine 115, histidine 117, aspartate 119, histidine 178, and cysteine 197 each coordinate Zn(2+). Substrate contacts are provided by lysine 200 and asparagine 209. Residue histidine 239 participates in Zn(2+) binding.

It belongs to the metallo-beta-lactamase superfamily. Class-B beta-lactamase family. Monomer. Zn(2+) is required as a cofactor.

It localises to the periplasm. It catalyses the reaction a beta-lactam + H2O = a substituted beta-amino acid. Its activity is regulated as follows. Inhibited by chelating agents such as EDTA. Confers resistance to the different beta-lactams antibiotics (penicillin, cephalosporin and carbapenem) via the hydrolysis of the beta-lactam ring. Benzylpenicillin is a better substrate than cephalosporin C and ampicillin. This Bacillus cereus protein is Metallo-beta-lactamase type 2.